A 721-amino-acid chain; its full sequence is Polyribonucleotide nucleotidyltransferase (721 aa).

Residues Asp-495 and Asp-501 each coordinate Mg(2+). Residues 562–621 form the KH domain; the sequence is PRLLSFRIDPELIGTVIGPGGRTIKGITERTNTKIDIEDSGIVTIASHDGAAADEAQKII. The S1 motif domain maps to 631–699; the sequence is GEVFSGAITR…NRGRINLTLR (69 aa). A disordered region spans residues 700 to 721; it reads GVPQNGEEAEPAPAPTPVAPLN. Residues 711-721 show a composition bias toward pro residues; that stretch reads APAPTPVAPLN.

It belongs to the polyribonucleotide nucleotidyltransferase family. The cofactor is Mg(2+).

It localises to the cytoplasm. The catalysed reaction is RNA(n+1) + phosphate = RNA(n) + a ribonucleoside 5'-diphosphate. Involved in mRNA degradation. Catalyzes the phosphorolysis of single-stranded polyribonucleotides processively in the 3'- to 5'-direction. This is Polyribonucleotide nucleotidyltransferase from Synechococcus sp. (strain WH7803).